Reading from the N-terminus, the 197-residue chain is Protein GrpE (197 aa).

Residues 1-39 (MSSKEQKTPEGQAPEEIIMDQHEEIEAVEPEASAEQVDP) form a disordered region.

It belongs to the GrpE family. Homodimer.

The protein resides in the cytoplasm. Its function is as follows. Participates actively in the response to hyperosmotic and heat shock by preventing the aggregation of stress-denatured proteins, in association with DnaK and GrpE. It is the nucleotide exchange factor for DnaK and may function as a thermosensor. Unfolded proteins bind initially to DnaJ; upon interaction with the DnaJ-bound protein, DnaK hydrolyzes its bound ATP, resulting in the formation of a stable complex. GrpE releases ADP from DnaK; ATP binding to DnaK triggers the release of the substrate protein, thus completing the reaction cycle. Several rounds of ATP-dependent interactions between DnaJ, DnaK and GrpE are required for fully efficient folding. The protein is Protein GrpE of Escherichia coli O157:H7 (strain EC4115 / EHEC).